Here is a 202-residue protein sequence, read N- to C-terminus: Large ribosomal subunit protein uL13 (202 aa).

It belongs to the universal ribosomal protein uL13 family. Component of the large ribosomal subunit (LSU). Mature N.crassa ribosomes consist of a small (40S) and a large (60S) subunit. The 40S small subunit contains 1 molecule of ribosomal RNA (18S rRNA) and at least 32 different proteins. The large 60S subunit contains 3 rRNA molecules (26S, 5.8S and 5S rRNA) and at least 42 different proteins.

Its subcellular location is the cytoplasm. In terms of biological role, component of the ribosome, a large ribonucleoprotein complex responsible for the synthesis of proteins in the cell. The small ribosomal subunit (SSU) binds messenger RNAs (mRNAs) and translates the encoded message by selecting cognate aminoacyl-transfer RNA (tRNA) molecules. The large subunit (LSU) contains the ribosomal catalytic site termed the peptidyl transferase center (PTC), which catalyzes the formation of peptide bonds, thereby polymerizing the amino acids delivered by tRNAs into a polypeptide chain. The nascent polypeptides leave the ribosome through a tunnel in the LSU and interact with protein factors that function in enzymatic processing, targeting, and the membrane insertion of nascent chains at the exit of the ribosomal tunnel. This is Large ribosomal subunit protein uL13 (crp-46) from Neurospora crassa (strain ATCC 24698 / 74-OR23-1A / CBS 708.71 / DSM 1257 / FGSC 987).